We begin with the raw amino-acid sequence, 932 residues long: von Willebrand factor A domain-containing protein DDB_G0292028 (932 aa).

Residues 1 to 49 (MNFIKKVIGGGSSKSKTDIKIEDEQHEQQHEQQHEKQQIPDKISTSKVN) are disordered. Basic and acidic residues predominate over residues 15–39 (SKTDIKIEDEQHEQQHEQQHEKQQI). Residues 95–222 (LTSPGLNTKV…DVTVNITITS (128 aa)) enclose the VIT domain. The region spanning 342 to 521 (EFIFVLDCSG…IAMQPTLSNI (180 aa)) is the VWFA domain. Disordered regions lie at residues 661 to 752 (QQIN…SQAQ) and 800 to 834 (TSQISQSSRECRSKKSSSPTIQKSSSLPSRPSTSS). The segment covering 677–686 (TRVQGSSSVF) has biased composition (polar residues). The span at 815–834 (SSSPTIQKSSSLPSRPSTSS) shows a compositional bias: low complexity.

The protein is von Willebrand factor A domain-containing protein DDB_G0292028 of Dictyostelium discoideum (Social amoeba).